The chain runs to 207 residues: FMN-dependent NADH:quinone oxidoreductase 3 (207 aa).

FMN is bound by residues Ser10 and 16 to 18 (SIS).

Belongs to the azoreductase type 1 family. In terms of assembly, homodimer. The cofactor is FMN.

It catalyses the reaction 2 a quinone + NADH + H(+) = 2 a 1,4-benzosemiquinone + NAD(+). The catalysed reaction is N,N-dimethyl-1,4-phenylenediamine + anthranilate + 2 NAD(+) = 2-(4-dimethylaminophenyl)diazenylbenzoate + 2 NADH + 2 H(+). Its function is as follows. Quinone reductase that provides resistance to thiol-specific stress caused by electrophilic quinones. Functionally, also exhibits azoreductase activity. Catalyzes the reductive cleavage of the azo bond in aromatic azo compounds to the corresponding amines. This is FMN-dependent NADH:quinone oxidoreductase 3 from Burkholderia lata (strain ATCC 17760 / DSM 23089 / LMG 22485 / NCIMB 9086 / R18194 / 383).